We begin with the raw amino-acid sequence, 231 residues long: Large ribosomal subunit protein uL1 (231 aa).

The protein belongs to the universal ribosomal protein uL1 family. In terms of assembly, part of the 50S ribosomal subunit.

Functionally, binds directly to 23S rRNA. The L1 stalk is quite mobile in the ribosome, and is involved in E site tRNA release. Its function is as follows. Protein L1 is also a translational repressor protein, it controls the translation of the L11 operon by binding to its mRNA. The polypeptide is Large ribosomal subunit protein uL1 (Pseudomonas entomophila (strain L48)).